A 247-amino-acid chain; its full sequence is Adenosylcobinamide-GDP ribazoletransferase (247 aa).

5 consecutive transmembrane segments (helical) span residues 34-54 (IITF…VFMV), 59-79 (CGVP…TGGF), 113-133 (GGLA…ELAL), 138-158 (ILAS…LLMY), and 194-214 (VLLP…AIFI).

This sequence belongs to the CobS family. Mg(2+) is required as a cofactor.

The protein localises to the cell inner membrane. It carries out the reaction alpha-ribazole + adenosylcob(III)inamide-GDP = adenosylcob(III)alamin + GMP + H(+). It catalyses the reaction alpha-ribazole 5'-phosphate + adenosylcob(III)inamide-GDP = adenosylcob(III)alamin 5'-phosphate + GMP + H(+). It participates in cofactor biosynthesis; adenosylcobalamin biosynthesis; adenosylcobalamin from cob(II)yrinate a,c-diamide: step 7/7. Joins adenosylcobinamide-GDP and alpha-ribazole to generate adenosylcobalamin (Ado-cobalamin). Also synthesizes adenosylcobalamin 5'-phosphate from adenosylcobinamide-GDP and alpha-ribazole 5'-phosphate. The chain is Adenosylcobinamide-GDP ribazoletransferase from Escherichia coli O7:K1 (strain IAI39 / ExPEC).